Here is a 682-residue protein sequence, read N- to C-terminus: MSRKQLALFEPVLLVQALTDAVKKLSPRAQWRNPVMFVVWAGSVLTTLLTLAMVTGQIAGSALFTGVISLWLWFTVLFANFAEALAEGRSKAQANSLKGVKKTAFARRLRAPRHDAQADNVPAAELRKGDIVLVKAGDIIPCDGEVIEGGASVDESAITGESAPVIRESGGDFASVTGGTRILSDWLVIACSVNPGETFLDRMIAMVEGAQRRKTPNEIALTILLIALTIVFLLATATLWPFSAWGGNAVSVTVLVALLVCLIPTTIGGLLSAIGVAGMSRMLGANVIATSGRAVEAAGDVDVLLLDKTGTITLGNRQASDFIPARGVDERALADAAQLASLADETPEGRSIVILAKQRFNLRERDMQSLHATFVPFTAQSRMSGINIDNRMIRKGSVDAIRRHVESNGGHFPADVEQNVENVARLGATPLVVVEGARVLGVIALKDIVKGGIKERFAQLRKMGIKTVMITGDNRLTAAAIAAEAGVDDFLAEATPEAKLALIRQYQAEGRLVAMTGDGTNDAPALAQADVAVAMNSGTQAAKEAGNMVDLDSNPTKLIEVVHIGKQMLMTRGSLTTFSIANDVAKYFAIIPAAFAATYPQLNALNVMGLHSPNSAILSAVIFNALIIIFLIPLALKGVSYKPLSASAMLRRNLWIYGLGGLVVPFIGIKVIDVLLTLLGLA.

4 helical membrane-spanning segments follow: residues Pro-34–Val-54, Ile-58–Phe-78, Ile-219–Leu-239, and Val-254–Ile-274. Asp-307 acts as the 4-aspartylphosphate intermediate in catalysis. ATP is bound by residues Asp-344, Glu-348, Phe-377–Ser-384, and Lys-395. Mg(2+) contacts are provided by Asp-518 and Asp-522. 3 consecutive transmembrane segments (helical) span residues Phe-588–Met-608, Ala-616–Leu-636, and Leu-662–Ala-682.

This sequence belongs to the cation transport ATPase (P-type) (TC 3.A.3) family. Type IA subfamily. As to quaternary structure, the system is composed of three essential subunits: KdpA, KdpB and KdpC.

The protein localises to the cell inner membrane. The catalysed reaction is K(+)(out) + ATP + H2O = K(+)(in) + ADP + phosphate + H(+). In terms of biological role, part of the high-affinity ATP-driven potassium transport (or Kdp) system, which catalyzes the hydrolysis of ATP coupled with the electrogenic transport of potassium into the cytoplasm. This subunit is responsible for energy coupling to the transport system and for the release of the potassium ions to the cytoplasm. This Salmonella paratyphi A (strain ATCC 9150 / SARB42) protein is Potassium-transporting ATPase ATP-binding subunit.